A 1597-amino-acid chain; its full sequence is Pentafunctional AROM polypeptide (1597 aa).

The tract at residues 1-384 (MGVPTKISIL…HEPRASTVSN (384 aa)) is 3-dehydroquinate synthase. NAD(+) is bound by residues 44 to 46 (DTN), 81 to 84 (ESSK), 114 to 116 (GGV), and Asp-119. A 7-phospho-2-dehydro-3-deoxy-D-arabino-heptonate-binding site is contributed by Arg-130. 139–140 (TT) is an NAD(+) binding site. 7-phospho-2-dehydro-3-deoxy-D-arabino-heptonate is bound by residues Asp-146 and Lys-152. Lys-161 contacts NAD(+). Asn-162 contacts 7-phospho-2-dehydro-3-deoxy-D-arabino-heptonate. NAD(+) is bound by residues 179–182 (FLNT) and Asn-190. A Zn(2+)-binding site is contributed by Glu-194. Residues 194–197 (EVIK) and Lys-250 contribute to the 7-phospho-2-dehydro-3-deoxy-D-arabino-heptonate site. The active-site Proton acceptor; for 3-dehydroquinate synthase activity is the Glu-260. 7-phospho-2-dehydro-3-deoxy-D-arabino-heptonate-binding positions include 264-268 (RNLLN) and His-271. Position 271 (His-271) interacts with Zn(2+). His-275 functions as the Proton acceptor; for 3-dehydroquinate synthase activity in the catalytic mechanism. 7-phospho-2-dehydro-3-deoxy-D-arabino-heptonate-binding residues include His-287 and Lys-356. Position 287 (His-287) interacts with Zn(2+). An EPSP synthase region spans residues 397–842 (VSPGVPKNLN…WDSLAQTFKV (446 aa)). The active-site For EPSP synthase activity is the Cys-824. Positions 866–1057 (ASIFIIGMRG…RSKENTFFVS (192 aa)) are shikimate kinase. 872–879 (GMRGAGKT) is a binding site for ATP. The tract at residues 1058-1278 (LTLPDLAPAA…AAPGQLSARE (221 aa)) is 3-dehydroquinase. His-1181 (proton acceptor; for 3-dehydroquinate dehydratase activity) is an active-site residue. Lys-1209 (schiff-base intermediate with substrate; for 3-dehydroquinate dehydratase activity) is an active-site residue. Residues 1291-1597 (SKKFAVIGNP…VQPKDDDIST (307 aa)) form a shikimate dehydrogenase region.

It in the N-terminal section; belongs to the sugar phosphate cyclases superfamily. Dehydroquinate synthase family. The protein in the 2nd section; belongs to the EPSP synthase family. This sequence in the 3rd section; belongs to the shikimate kinase family. In the 4th section; belongs to the type-I 3-dehydroquinase family. It in the C-terminal section; belongs to the shikimate dehydrogenase family. As to quaternary structure, homodimer. It depends on Zn(2+) as a cofactor.

The protein resides in the cytoplasm. The enzyme catalyses 7-phospho-2-dehydro-3-deoxy-D-arabino-heptonate = 3-dehydroquinate + phosphate. The catalysed reaction is 3-dehydroquinate = 3-dehydroshikimate + H2O. It catalyses the reaction shikimate + NADP(+) = 3-dehydroshikimate + NADPH + H(+). It carries out the reaction shikimate + ATP = 3-phosphoshikimate + ADP + H(+). The enzyme catalyses 3-phosphoshikimate + phosphoenolpyruvate = 5-O-(1-carboxyvinyl)-3-phosphoshikimate + phosphate. It functions in the pathway metabolic intermediate biosynthesis; chorismate biosynthesis; chorismate from D-erythrose 4-phosphate and phosphoenolpyruvate: step 2/7. It participates in metabolic intermediate biosynthesis; chorismate biosynthesis; chorismate from D-erythrose 4-phosphate and phosphoenolpyruvate: step 3/7. Its pathway is metabolic intermediate biosynthesis; chorismate biosynthesis; chorismate from D-erythrose 4-phosphate and phosphoenolpyruvate: step 4/7. The protein operates within metabolic intermediate biosynthesis; chorismate biosynthesis; chorismate from D-erythrose 4-phosphate and phosphoenolpyruvate: step 5/7. It functions in the pathway metabolic intermediate biosynthesis; chorismate biosynthesis; chorismate from D-erythrose 4-phosphate and phosphoenolpyruvate: step 6/7. The AROM polypeptide catalyzes 5 consecutive enzymatic reactions in prechorismate polyaromatic amino acid biosynthesis. The chain is Pentafunctional AROM polypeptide from Ajellomyces dermatitidis (strain ER-3 / ATCC MYA-2586) (Blastomyces dermatitidis).